The primary structure comprises 66 residues: Large ribosomal subunit protein bL35 (66 aa).

A compositionally biased stretch (basic residues) spans 24 to 43; that stretch reads HKKAGKRHNLSKKSKARKRR. A disordered region spans residues 24–44; the sequence is HKKAGKRHNLSKKSKARKRRL.

This sequence belongs to the bacterial ribosomal protein bL35 family.

The polypeptide is Large ribosomal subunit protein bL35 (Dictyoglomus thermophilum (strain ATCC 35947 / DSM 3960 / H-6-12)).